Consider the following 360-residue polypeptide: Ribosomal RNA large subunit methyltransferase F (360 aa).

The segment at 1 to 36 is disordered; the sequence is MSKLISKQGKRPALSQSGLAKPSTSKKSSASKNANT. Residues 23 to 36 are compositionally biased toward low complexity; it reads STSKKSSASKNANT.

Belongs to the methyltransferase superfamily. METTL16/RlmF family.

The protein localises to the cytoplasm. The catalysed reaction is adenosine(1618) in 23S rRNA + S-adenosyl-L-methionine = N(6)-methyladenosine(1618) in 23S rRNA + S-adenosyl-L-homocysteine + H(+). Specifically methylates the adenine in position 1618 of 23S rRNA. This Shewanella denitrificans (strain OS217 / ATCC BAA-1090 / DSM 15013) protein is Ribosomal RNA large subunit methyltransferase F.